The chain runs to 486 residues: Elastin-binding protein EbpS (486 aa).

Basic and acidic residues predominate over residues 1–40 (MSNNFKDDFEKNRQSIDTNSHQDHTEDVEKDQSELEHQDT). The tract at residues 1 to 314 (MSNNFKDDFE…NHDRDKERKK (314 aa)) is disordered. Residues 2–204 (SNNFKDDFEK…ESKDHHSGKK (203 aa)) lie on the Extracellular side of the membrane. An elastin-binding region spans residues 14–34 (QSIDTNSHQDHTEDVEKDQSE). Positions 64–85 (TNHNKQVHNESQTSEDNVQNEA) are enriched in polar residues. Basic and acidic residues-rich tracts occupy residues 103–118 (EPSH…EEYY) and 126–149 (DKSH…ENNT). The segment covering 150–166 (EHSTVSDKSIAEQSQQP) has biased composition (polar residues). The span at 180–199 (SKDKHDDVTVKQDKDESKDH) shows a compositional bias: basic and acidic residues. Low complexity-rich tracts occupy residues 204 to 225 (KGAA…MGVS) and 233 to 246 (DAQN…SNNS). A helical membrane pass occupies residues 205 to 225 (GAAIGAGTAGVAGAAGAMGVS). Over 226–319 (KAKKHSNDAQ…KERKKGGMAK (94 aa)) the chain is Cytoplasmic. Over residues 247-259 (TEDKASQDKSKDH) the composition is skewed to basic and acidic residues. The segment covering 278–297 (GAASKSASAASKPHASNNAS) has biased composition (low complexity). The segment covering 299 to 314 (NHDEHDNHDRDKERKK) has biased composition (basic and acidic residues). A helical membrane pass occupies residues 320 to 340 (VLLPLIAAVLIIGALAIFGGM). Over 341 to 486 (ALNNHNNGTK…IRNGQQIVIP (146 aa)) the chain is Extracellular. Positions 351–440 (ENKIANTNKN…QRQGGGQRHT (90 aa)) are disordered. The segment covering 361–398 (NADESKDKDTSKDASKDKSKSTDSDKSKEDQDKATKDE) has biased composition (basic and acidic residues). Residues 403–431 (QNNANQANNQAQNNQNQQQANQNQQQQQQ) show a composition bias toward low complexity. Residues 437 to 485 (QRHTVNGQENLYRIAIQYYGSGSPENVEKIRRANGLSGNNIRNGQQIVI) enclose the LysM domain.

It localises to the cell membrane. Its function is as follows. Promotes binding of soluble elastin peptides and tropoelastin to S.aureus cells although it is not able to promote bacterial adherence to immobilized elastin and, therefore, is not a microbial surface component recognizing adhesive matrix molecule (MSCRAMM). The chain is Elastin-binding protein EbpS (ebpS) from Staphylococcus aureus (strain Mu50 / ATCC 700699).